A 243-amino-acid chain; its full sequence is Cell surface glycoprotein CD200 receptor 1-B (243 aa).

The Cytoplasmic segment spans residues Met1–Thr29. Residues Ala30 to Ile47 form a helical; Signal-anchor for type II membrane protein membrane-spanning segment. The region spanning Ile47–Thr146 is the Ig-like V-type domain. Residues Ser48–Pro243 are Lumenal-facing. 2 cysteine pairs are disulfide-bonded: Cys62–Cys130 and Cys165–Cys214. Asn64, Asn67, Asn127, Asn193, Asn222, and Asn228 each carry an N-linked (GlcNAc...) asparagine glycan. One can recognise an Ig-like C2-type domain in the interval His144–Asn228.

This sequence belongs to the CD200R family. As to expression, expressed in peripheral blood lymphocytes (PBL) and peripheral blood mononuclear cells (PBMC).

The protein resides in the membrane. The chain is Cell surface glycoprotein CD200 receptor 1-B (CD200R1B) from Gallus gallus (Chicken).